A 407-amino-acid chain; its full sequence is Cation efflux system protein CusB (407 aa).

Positions 1–28 (MKKIALIIGSMIAGGIISAAGFTWVAKA) are cleaved as a signal peptide.

This sequence belongs to the membrane fusion protein (MFP) (TC 8.A.1) family. As to quaternary structure, the cus efflux system is composed of CusA, CusB, CusC and CusF.

Its function is as follows. Part of a cation efflux system that mediates resistance to copper and silver. This Escherichia coli (strain K12) protein is Cation efflux system protein CusB (cusB).